A 563-amino-acid chain; its full sequence is Arginine--tRNA ligase (563 aa).

Positions 122 to 132 match the 'HIGH' region motif; sequence PNIAKPISMGH.

It belongs to the class-I aminoacyl-tRNA synthetase family. As to quaternary structure, monomer.

It localises to the cytoplasm. It carries out the reaction tRNA(Arg) + L-arginine + ATP = L-arginyl-tRNA(Arg) + AMP + diphosphate. This Latilactobacillus sakei subsp. sakei (strain 23K) (Lactobacillus sakei subsp. sakei) protein is Arginine--tRNA ligase.